A 257-amino-acid polypeptide reads, in one-letter code: UPF0246 protein A1S_2267 (257 aa).

This sequence belongs to the UPF0246 family.

This chain is UPF0246 protein A1S_2267, found in Acinetobacter baumannii (strain ATCC 17978 / DSM 105126 / CIP 53.77 / LMG 1025 / NCDC KC755 / 5377).